We begin with the raw amino-acid sequence, 143 residues long: Hemoglobin subunit alpha (143 aa).

The 142-residue stretch at 2-143 (SLTARDKSVV…LSAALADKYR (142 aa)) folds into the Globin domain. Residue His60 participates in O2 binding. His89 is a binding site for heme b.

The protein belongs to the globin family. In terms of assembly, heterotetramer of two alpha chains and two beta chains. As to expression, red blood cells.

Involved in oxygen transport from gills to the various peripheral tissues. In Salmo salar (Atlantic salmon), this protein is Hemoglobin subunit alpha (hba).